Here is an 88-residue protein sequence, read N- to C-terminus: uncharacterized protein (88 aa).

2 consecutive transmembrane segments (helical) span residues I8–F28 and E45–L65.

The protein resides in the membrane. This is an uncharacterized protein from Saccharomyces cerevisiae (strain ATCC 204508 / S288c) (Baker's yeast).